A 360-amino-acid chain; its full sequence is DNA replication and repair protein RecF (360 aa).

30–37 (GQNGSGKT) contacts ATP.

It belongs to the RecF family.

The protein localises to the cytoplasm. The RecF protein is involved in DNA metabolism; it is required for DNA replication and normal SOS inducibility. RecF binds preferentially to single-stranded, linear DNA. It also seems to bind ATP. The protein is DNA replication and repair protein RecF of Shewanella piezotolerans (strain WP3 / JCM 13877).